Consider the following 293-residue polypeptide: Non-structural protein NS-S (293 aa).

The essential for inhibition of IFN-beta activation and interaction with host TBK1 stretch occupies residues 21 to 29 (VRLEPSLGE). Residues 66 to 69 (PKNP) are involved in inclusion bodies formation. Residues 148-220 (FEGDMILDSL…KPLLDCWDFF (73 aa)) are interaction with host TNIP2.

Belongs to the Bandavirus NS-S protein family. Interacts with the host E3 ubiquitin ligase TRIM25; this interaction sequesters TRIM25 in NSs-induced cytoplasmic inclusion bodies. Interacts with the host E3 ubiquitin ligase RIGI; this interaction sequesters RIGI in NSs-induced cytoplasmic inclusion bodies. Interacts with the host E3 ubiquitin ligase TBK1 (via N-terminus); this interaction sequesters TBK1 in NSs-induced cytoplasmic inclusion bodies and inhibits TBK1 phosphorylation. NSs does not interact with IKBKE/IKKE or IRF3. Interacts with host IRF7; this interaction sequesters IRF7 in NSs-induced cytoplasmic inclusion bodies. Interacts with host SYNGR2; this interaction is essential to promoting the formation of the inclusion bodies to become virus factories for viral RNA replication through its interaction with NSs. Interacts with host STAT2; this interaction sequesters STAT2 in NSs-induced cytoplasmic inclusion bodies. Interacts with host TNIP2; this interaction promotes TPL2 complex formation and signaling activity leading to IL-10 production. Interacts with host TRIM21 (via B30.2/SPRY domain); this interaction activates host NFE2L2-mediated transcriptional activation of antioxidant genes. Interacts with host CDK1; this interaction is inclusion body dependent, it inhibits the formation and nuclear import of the cyclin B1-CDK1 complex and leads to host cell cycle arrest.

The protein resides in the host cytoplasm. It localises to the host cytoplasmic vesicle. Its function is as follows. Sequesters host STAT2 into viral inclusion bodies. Impairs IFN-stimulated phosphorylation and nuclear translocation of host STAT2, thereby suppressing type-I IFN antiviral signaling. Sequesters host TRIM25, RIGI, TBK1/IKK complex components (TBK1, IKBKE/IKKE, and IRF3) and IRF7 into viral inclusion bodies, thereby inhibiting the IFN responses. Inhibits TRIM25-mediated ubiquitination of the RIGI. The sequestration of IKBKE/IKKE, and IRF3 occurs via the interaction with TBK1. Sequestration and inhibition of host TBK1 probably participates to the cytokine storm induced by the virus. Also inhibits the phosphorylation of host TBK1. Interacts with host TNIP2 and promotes TPL2-TNIP2-p105 complex formation leading to IL-10 induction. By interacting with CDK1, induces host cell arrest at the G2/M transition to promote viral replication. Requested for the formation of the viral cytoplasmic inclusion bodies. The chain is Non-structural protein NS-S (NSS) from SFTS phlebovirus (isolate SFTSV/Human/China/HB29/2010) (Severe fever with thrombocytopenia virus).